Here is an 856-residue protein sequence, read N- to C-terminus: Lon protease homolog 2, peroxisomal (856 aa).

Residues 13 to 222 form the Lon N-terminal domain; sequence LPLLLTHEGV…VTIPLLLRQI (210 aa). 379-386 is a binding site for ATP; sequence GPPGVGKT. Basic and acidic residues predominate over residues 586–608; sequence GQHREHKSEHLEAPEGEERKESV. The disordered stretch occupies residues 586–614; the sequence is GQHREHKSEHLEAPEGEERKESVPEGSKS. The Lon proteolytic domain maps to 655–841; sequence LNQPGVAIGL…DEVLNAAFDG (187 aa). Active-site residues include Ser747 and Lys790. The short motif at 854 to 856 is the Microbody targeting signal element; it reads SKL.

It belongs to the peptidase S16 family.

It is found in the peroxisome matrix. The catalysed reaction is Hydrolysis of proteins in presence of ATP.. Its function is as follows. ATP-dependent serine protease that mediates the selective degradation of misfolded and unassembled polypeptides in the peroxisomal matrix. Necessary for type 2 peroxisome targeting signal (PTS2)-containing protein processing and facilitates peroxisome matrix protein import. This chain is Lon protease homolog 2, peroxisomal (lonp2), found in Xenopus laevis (African clawed frog).